A 255-amino-acid chain; its full sequence is Vitamin B12 import ATP-binding protein BtuD (255 aa).

In terms of domain architecture, ABC transporter spans 2–240 (MHVKHIALGS…EGLAEVFQTQ (239 aa)). Position 30 to 37 (30 to 37 (GPNGSGKS)) interacts with ATP.

The protein belongs to the ABC transporter superfamily. Vitamin B12 importer (TC 3.A.1.13.1) family. In terms of assembly, the complex is composed of two ATP-binding proteins (BtuD), two transmembrane proteins (BtuC) and a solute-binding protein (BtuF).

Its subcellular location is the cell inner membrane. It carries out the reaction an R-cob(III)alamin(out) + ATP + H2O = an R-cob(III)alamin(in) + ADP + phosphate + H(+). In terms of biological role, part of the ABC transporter complex BtuCDF involved in vitamin B12 import. Responsible for energy coupling to the transport system. In Vibrio campbellii (strain ATCC BAA-1116), this protein is Vitamin B12 import ATP-binding protein BtuD.